A 245-amino-acid polypeptide reads, in one-letter code: Transcriptional regulatory protein YpdB (245 aa).

One can recognise a Response regulatory domain in the interval 2–116 (KVIIVEDEFL…RITGMLQKLE (115 aa)). D53 is subject to 4-aspartylphosphate. In terms of domain architecture, HTH LytTR-type spans 140 to 245 (INLVKDERII…VKEFRQLMHL (106 aa)).

Post-translationally, phosphorylated by YpdA.

The protein resides in the cytoplasm. Its function is as follows. Member of the two-component regulatory system YpdA/YpdB. YpdB regulates expression of yhjX by binding to its promoter region. The protein is Transcriptional regulatory protein YpdB (ypdB) of Escherichia coli O6:H1 (strain CFT073 / ATCC 700928 / UPEC).